Consider the following 143-residue polypeptide: Large ribosomal subunit protein uL15 (143 aa).

Composition is skewed to basic residues over residues methionine 1–glycine 13 and lysine 23–glycine 38. Residues methionine 1–glycine 38 are disordered.

Belongs to the universal ribosomal protein uL15 family. As to quaternary structure, part of the 50S ribosomal subunit.

Functionally, binds to the 23S rRNA. This chain is Large ribosomal subunit protein uL15, found in Methanococcus maripaludis (strain C5 / ATCC BAA-1333).